Consider the following 224-residue polypeptide: 7-cyano-7-deazaguanine synthase (224 aa).

Residue 9-19 (ISGGMDSTLCA) coordinates ATP. Zn(2+) contacts are provided by C190, C198, C201, and C204.

The protein belongs to the QueC family. Zn(2+) serves as cofactor.

The enzyme catalyses 7-carboxy-7-deazaguanine + NH4(+) + ATP = 7-cyano-7-deazaguanine + ADP + phosphate + H2O + H(+). Its pathway is purine metabolism; 7-cyano-7-deazaguanine biosynthesis. Its function is as follows. Catalyzes the ATP-dependent conversion of 7-carboxy-7-deazaguanine (CDG) to 7-cyano-7-deazaguanine (preQ(0)). The protein is 7-cyano-7-deazaguanine synthase of Campylobacter jejuni subsp. jejuni serotype O:6 (strain 81116 / NCTC 11828).